The chain runs to 541 residues: Formimidoyltransferase-cyclodeaminase (541 aa).

The formiminotransferase N-subdomain stretch occupies residues 1 to 181; the sequence is MSQLVECVPN…GATVAGARKF (181 aa). The active-site For formimidoyltransferase activity is His-82. Residue 163-172 participates in folate binding; that stretch reads GPSAFVPSWG. Residues 182-326 are formiminotransferase C-subdomain; the sequence is LLAFNINLLS…PKERIIEYLV (145 aa). The tract at residues 327–334 is linker; sequence PEAGPEQS. The cyclodeaminase/cyclohydrolase stretch occupies residues 335–541; sequence LLHKPLRTFV…VLDRLEARQA (207 aa). The active-site For cyclodeaminase activity is Asp-412. Residue Ser-520 is modified to Phosphoserine.

In the C-terminal section; belongs to the cyclodeaminase/cyclohydrolase family. This sequence in the N-terminal section; belongs to the formiminotransferase family. Homooctamer, including four polyglutamate binding sites. The subunits are arranged as a tetramer of dimers, and form a planar ring-shaped structure.

Its subcellular location is the cytoplasm. It is found in the cytosol. The protein localises to the golgi apparatus. It localises to the cytoskeleton. The protein resides in the microtubule organizing center. Its subcellular location is the centrosome. It is found in the centriole. The enzyme catalyses 5-formimidoyltetrahydrofolate + L-glutamate = N-formimidoyl-L-glutamate + (6S)-5,6,7,8-tetrahydrofolate. The catalysed reaction is 5-formimidoyltetrahydrofolate + 2 H(+) = (6R)-5,10-methenyltetrahydrofolate + NH4(+). The protein operates within amino-acid degradation; L-histidine degradation into L-glutamate; L-glutamate from N-formimidoyl-L-glutamate (transferase route): step 1/1. Its function is as follows. Folate-dependent enzyme, that displays both transferase and deaminase activity. Serves to channel one-carbon units from formiminoglutamate to the folate pool. Functionally, binds and promotes bundling of vimentin filaments originating from the Golgi. This chain is Formimidoyltransferase-cyclodeaminase (FTCD), found in Sus scrofa (Pig).